The primary structure comprises 77 residues: U8-lycotoxin-Ls1t (77 aa).

Positions M1 to A20 are cleaved as a signal peptide. Positions Q21–K26 are excised as a propeptide.

Belongs to the neurotoxin 19 (CSTX) family. 08 (U8-Lctx) subfamily. Post-translationally, contains 4 disulfide bonds. Expressed by the venom gland.

The protein resides in the secreted. This chain is U8-lycotoxin-Ls1t, found in Lycosa singoriensis (Wolf spider).